Here is a 270-residue protein sequence, read N- to C-terminus: Tryptophan synthase alpha chain (270 aa).

Catalysis depends on proton acceptor residues glutamate 49 and aspartate 60.

This sequence belongs to the TrpA family. In terms of assembly, tetramer of two alpha and two beta chains.

The catalysed reaction is (1S,2R)-1-C-(indol-3-yl)glycerol 3-phosphate + L-serine = D-glyceraldehyde 3-phosphate + L-tryptophan + H2O. It participates in amino-acid biosynthesis; L-tryptophan biosynthesis; L-tryptophan from chorismate: step 5/5. Functionally, the alpha subunit is responsible for the aldol cleavage of indoleglycerol phosphate to indole and glyceraldehyde 3-phosphate. The polypeptide is Tryptophan synthase alpha chain (Pseudomonas fluorescens (strain Pf0-1)).